The sequence spans 169 residues: Protein YABBY 7 (169 aa).

The C4-type zinc-finger motif lies at 21–48 (CSFCATVLLVSVPCSSVLRVVAVQCGHC). The tract at residues 63–122 (SASIELTPQELDAGPPPGEYSDESSGDDREGRDAEDDAPAPAAAAVANKPPGRKQRTPSA) is disordered.

Belongs to the YABBY family. In terms of tissue distribution, expressed in leaf sheaths and flowers.

Its subcellular location is the nucleus. The chain is Protein YABBY 7 (YAB7) from Oryza sativa subsp. japonica (Rice).